A 1435-amino-acid chain; its full sequence is Guanine nucleotide exchange factor LTE1 (1435 aa).

In terms of domain architecture, N-terminal Ras-GEF spans 25–157 (VSKPVNSADL…SCIINLKKNW (133 aa)). Residues 235–256 (KLQSSNSSKNQRSPSMLLFPDN) form a disordered region. Over residues 237-249 (QSSNSSKNQRSPS) the composition is skewed to low complexity. The residue at position 271 (Ser271) is a Phosphoserine. Residues 338-365 (QSGTLQGTSTTSSLDNNSNSNSRSNTSS) form a disordered region. Position 559 is a phosphoserine (Ser559). Residues 582-606 (KDNSSSRTDENGPQRLLFHETDKTN) are compositionally biased toward basic and acidic residues. The tract at residues 582–689 (KDNSSSRTDE…VRNIVNNTDS (108 aa)) is disordered. Over residues 621–632 (SQSQKSMTSSPL) the composition is skewed to polar residues. Residues 654–667 (SITYSYDSELSSSS) show a composition bias toward low complexity. The residue at position 689 (Ser689) is a Phosphoserine. A Phosphothreonine modification is found at Thr691. Residues 723–744 (EKNYDNKENQESEYESTKKLDN) show a composition bias toward basic and acidic residues. The segment at 723-747 (EKNYDNKENQESEYESTKKLDNSLD) is disordered. A phosphoserine mark is found at Ser808 and Ser810. Positions 851-871 (AQNSPLKQTQNPQREFPNGTS) are disordered. 2 positions are modified to phosphoserine: Ser1028 and Ser1109. The 241-residue stretch at 1194–1434 (DSLSVAQQMT…LTQEEINELS (241 aa)) folds into the Ras-GEF domain.

It belongs to the LTE1 family. In terms of assembly, interacts with CDC24, CDC42, KEL1, KEL2, RAS2 and TEM1. In terms of processing, phosphorylated by CDC28 in a cell cycle-dependent manner and in response to nocodazole. Dephosphorylion by CDC14 triggers LTE1 release from bud cortex during the exit of mitosis.

The protein localises to the cytoplasm. It is found in the bud. Functionally, GDP-GTP exchange factor for TEM1, a Ras-like protein, component of the mitotic exit network (MEN). Activation of TEM1 by LTE1 in the bud ultimately leads to activation of CDC15 followed by the release of CDC14 from the nucleolus, which then inactivates cyclin-dependent kinases (CDKs) activity by several mechanism. Required for TEM1 localization to the bud cortex during mitotic exit. Fine-tunes the timing of the mitotic exit and couples this event with cytokinesis. In terms of biological role, involved in proprotein-processing like proalpha factor-processing in the secretory pathway. The polypeptide is Guanine nucleotide exchange factor LTE1 (LTE1) (Saccharomyces cerevisiae (strain ATCC 204508 / S288c) (Baker's yeast)).